The following is a 616-amino-acid chain: Chaperone protein DnaK (616 aa).

Thr-174 is subject to Phosphothreonine; by autocatalysis. Residues 575–616 (QQTQGAQSDPGAAGFGGQQEAPGAGQDENVVDADYKVVDDDK) form a disordered region. A compositionally biased stretch (basic and acidic residues) spans 607 to 616 (ADYKVVDDDK).

It belongs to the heat shock protein 70 family.

Functionally, acts as a chaperone. In Ruminiclostridium cellulolyticum (strain ATCC 35319 / DSM 5812 / JCM 6584 / H10) (Clostridium cellulolyticum), this protein is Chaperone protein DnaK.